The chain runs to 131 residues: UPF0102 protein YraN (131 aa).

Positions 1–19 (MATVPTRSGSPRQLTTKQT) are enriched in polar residues. The segment at 1–20 (MATVPTRSGSPRQLTTKQTG) is disordered.

The protein belongs to the UPF0102 family.

In Escherichia fergusonii (strain ATCC 35469 / DSM 13698 / CCUG 18766 / IAM 14443 / JCM 21226 / LMG 7866 / NBRC 102419 / NCTC 12128 / CDC 0568-73), this protein is UPF0102 protein YraN.